A 543-amino-acid chain; its full sequence is Phosphoenolpyruvate carboxykinase (ATP) (543 aa).

An ATP-binding site is contributed by 244 to 251 (GLSGTGKT).

The protein belongs to the phosphoenolpyruvate carboxykinase (ATP) family.

It carries out the reaction oxaloacetate + ATP = phosphoenolpyruvate + ADP + CO2. It participates in carbohydrate biosynthesis; gluconeogenesis. In Kluyveromyces lactis (strain ATCC 8585 / CBS 2359 / DSM 70799 / NBRC 1267 / NRRL Y-1140 / WM37) (Yeast), this protein is Phosphoenolpyruvate carboxykinase (ATP) (PCK1).